The primary structure comprises 410 residues: Histidine--tRNA ligase (410 aa).

This sequence belongs to the class-II aminoacyl-tRNA synthetase family.

The protein resides in the cytoplasm. The enzyme catalyses tRNA(His) + L-histidine + ATP = L-histidyl-tRNA(His) + AMP + diphosphate + H(+). In Methanoculleus marisnigri (strain ATCC 35101 / DSM 1498 / JR1), this protein is Histidine--tRNA ligase.